Here is a 294-residue protein sequence, read N- to C-terminus: 4-hydroxy-tetrahydrodipicolinate synthase (294 aa).

Pyruvate is bound at residue threonine 47. Residue tyrosine 135 is the Proton donor/acceptor of the active site. The Schiff-base intermediate with substrate role is filled by lysine 163. Isoleucine 206 contributes to the pyruvate binding site.

This sequence belongs to the DapA family. As to quaternary structure, homodimer.

The protein localises to the cytoplasm. It carries out the reaction L-aspartate 4-semialdehyde + pyruvate = (2S,4S)-4-hydroxy-2,3,4,5-tetrahydrodipicolinate + H2O + H(+). It functions in the pathway amino-acid biosynthesis; L-lysine biosynthesis via DAP pathway; (S)-tetrahydrodipicolinate from L-aspartate: step 3/4. Its function is as follows. Catalyzes the condensation of (S)-aspartate-beta-semialdehyde [(S)-ASA] and pyruvate to 4-hydroxy-tetrahydrodipicolinate (HTPA). The protein is 4-hydroxy-tetrahydrodipicolinate synthase of Staphylococcus carnosus (strain TM300).